The sequence spans 273 residues: Dermonecrotic toxin LruSicTox-alphaIC1a (273 aa).

His5 is an active-site residue. Mg(2+)-binding residues include Glu25 and Asp27. His41 functions as the Nucleophile in the catalytic mechanism. 2 disulfides stabilise this stretch: Cys45–Cys51 and Cys47–Cys190. Asp85 contributes to the Mg(2+) binding site.

Belongs to the arthropod phospholipase D family. Class II subfamily. It depends on Mg(2+) as a cofactor. As to expression, expressed by the venom gland.

The protein localises to the secreted. It catalyses the reaction an N-(acyl)-sphingosylphosphocholine = an N-(acyl)-sphingosyl-1,3-cyclic phosphate + choline. The enzyme catalyses an N-(acyl)-sphingosylphosphoethanolamine = an N-(acyl)-sphingosyl-1,3-cyclic phosphate + ethanolamine. It carries out the reaction a 1-acyl-sn-glycero-3-phosphocholine = a 1-acyl-sn-glycero-2,3-cyclic phosphate + choline. The catalysed reaction is a 1-acyl-sn-glycero-3-phosphoethanolamine = a 1-acyl-sn-glycero-2,3-cyclic phosphate + ethanolamine. Functionally, dermonecrotic toxins cleave the phosphodiester linkage between the phosphate and headgroup of certain phospholipids (sphingolipid and lysolipid substrates), forming an alcohol (often choline) and a cyclic phosphate. This toxin acts on sphingomyelin (SM). It may also act on ceramide phosphoethanolamine (CPE), lysophosphatidylcholine (LPC) and lysophosphatidylethanolamine (LPE), but not on lysophosphatidylserine (LPS), and lysophosphatidylglycerol (LPG). It acts by transphosphatidylation, releasing exclusively cyclic phosphate products as second products. Induces dermonecrosis, hemolysis, increased vascular permeability, edema, inflammatory response, and platelet aggregation. This chain is Dermonecrotic toxin LruSicTox-alphaIC1a, found in Loxosceles rufescens (Mediterranean recluse spider).